The sequence spans 966 residues: Translation initiation factor IF-2 (966 aa).

Basic and acidic residues-rich tracts occupy residues 99 to 113 (KRDE…EAAD), 123 to 183 (EQAR…KAEE), 197 to 212 (DASR…RVAV), 220 to 249 (AADD…EAEA), and 266 to 277 (PSERKAEEKKAE). Residues 99–382 (KRDEAGADQH…NFQAPTEPVV (284 aa)) are disordered. The span at 304 to 315 (AATTTTTTATTT) shows a compositional bias: low complexity. A compositionally biased stretch (gly residues) spans 346–359 (SSGGVGGWRGGPRG). Residues 466 to 635 (PRPPVVTVMG…LLQAEVLELK (170 aa)) enclose the tr-type G domain. Residues 475–482 (GHVDHGKT) form a G1 region. 475–482 (GHVDHGKT) serves as a coordination point for GTP. Positions 500 to 504 (GITQH) are G2. The segment at 521-524 (DTPG) is G3. Residues 521-525 (DTPGH) and 575-578 (NKID) each bind GTP. Residues 575–578 (NKID) form a G4 region. Residues 611–613 (SAK) form a G5 region.

This sequence belongs to the TRAFAC class translation factor GTPase superfamily. Classic translation factor GTPase family. IF-2 subfamily.

It is found in the cytoplasm. In terms of biological role, one of the essential components for the initiation of protein synthesis. Protects formylmethionyl-tRNA from spontaneous hydrolysis and promotes its binding to the 30S ribosomal subunits. Also involved in the hydrolysis of GTP during the formation of the 70S ribosomal complex. This Cupriavidus pinatubonensis (strain JMP 134 / LMG 1197) (Cupriavidus necator (strain JMP 134)) protein is Translation initiation factor IF-2.